The following is a 190-amino-acid chain: MSEQKTLSVQKRDNLGKGANRRLRSEEVVPGVFYDTKGNNVAVQMPAKPLQKLFEEVGRTTVFQLEIEEEGKKSTHPVLIWDALFHPYKKKFTHIDFFGVDLDREIKIRVPLEFVGTSRGVKLGGKLEVYREFIDVMSKPLTLPKKITLDLTELDINSTIMLKDVAMPEGVRPATNENFAILSVLTPKSE.

Residues 1–20 form a disordered region; that stretch reads MSEQKTLSVQKRDNLGKGAN.

It belongs to the bacterial ribosomal protein bL25 family. CTC subfamily. As to quaternary structure, part of the 50S ribosomal subunit; part of the 5S rRNA/L5/L18/L25 subcomplex. Contacts the 5S rRNA. Binds to the 5S rRNA independently of L5 and L18.

Its function is as follows. This is one of the proteins that binds to the 5S RNA in the ribosome where it forms part of the central protuberance. The sequence is that of Large ribosomal subunit protein bL25 from Nitratidesulfovibrio vulgaris (strain ATCC 29579 / DSM 644 / CCUG 34227 / NCIMB 8303 / VKM B-1760 / Hildenborough) (Desulfovibrio vulgaris).